A 25-amino-acid chain; its full sequence is Xenoposin precursor fragment BM2 (25 aa).

In terms of tissue distribution, expressed by the skin glands.

Its subcellular location is the secreted. Its function is as follows. Antimicrobial peptide. This chain is Xenoposin precursor fragment BM2, found in Xenopus boumbaensis (Mawa clawed frog).